The following is a 31-amino-acid chain: Cyclopsychotride-A (31 aa).

The segment at residues Ser-1–Asn-31 is a cross-link (cyclopeptide (Ser-Asn)). Cystine bridges form between Cys-4/Cys-21, Cys-8/Cys-23, and Cys-13/Cys-28.

It belongs to the cyclotide family. Bracelet subfamily. In terms of processing, this is a cyclic peptide.

Probably participates in a plant defense mechanism. Has antibiotic activity. Inhibits the cytopathic effects and replication of the human immunodeficiency virus. Active against both Gram-positive and Gram-negative bacteria. In Psychotria longipes, this protein is Cyclopsychotride-A.